The chain runs to 179 residues: Large ribosomal subunit protein uL6 (179 aa).

The protein belongs to the universal ribosomal protein uL6 family. In terms of assembly, part of the 50S ribosomal subunit.

Functionally, this protein binds to the 23S rRNA, and is important in its secondary structure. It is located near the subunit interface in the base of the L7/L12 stalk, and near the tRNA binding site of the peptidyltransferase center. This Acaryochloris marina (strain MBIC 11017) protein is Large ribosomal subunit protein uL6.